A 143-amino-acid chain; its full sequence is MASKSNCVLLLAAVLVSIFAAVAAIGNEDCTPWMSTLITPLPSCRDYVEQQACRIETPGSPYLAKQQCCGELANIPQQCRCQALRYFMGPKSRPDQSGLMELPGCPREVQMDFVRILVTPGYCNLTTVHNTPYCLAMEESQWS.

The first 24 residues, 1–24, serve as a signal peptide directing secretion; that stretch reads MASKSNCVLLLAAVLVSIFAAVAA.

This sequence belongs to the protease inhibitor I6 (cereal trypsin/alpha-amylase inhibitor) family. In terms of assembly, subunit of the tetrameric inhibitor. Post-translationally, five disulfide bonds, which are essential for the inhibitor activity, are probably present. In terms of tissue distribution, developing endosperm.

It localises to the secreted. Alpha-amylase/trypsin inhibitor. It could be involved in insect defense mechanisms. The chain is Alpha-amylase/trypsin inhibitor CM16 from Triticum aestivum (Wheat).